The following is a 131-amino-acid chain: C-type natriuretic peptide 1 (131 aa).

Residues 1 to 22 (MLCPVLLCATLLLLTPFEVTEA) form the signal peptide. A propeptide spanning residues 23–109 (RALHPSADAV…KRAEPDRSRR (87 aa)) is cleaved from the precursor. A disulfide bond links C115 and C131.

Belongs to the natriuretic peptide family. As to expression, brain and spinal cord.

The protein localises to the secreted. Its function is as follows. Exhibits natriuretic and vasodepressant activity. Has cGMP-stimulating activity. May help to regulate body fluid homeostasis in a variety of aquatic environments. This Oryzias latipes (Japanese rice fish) protein is C-type natriuretic peptide 1.